Consider the following 98-residue polypeptide: NADH-ubiquinone oxidoreductase chain 4L (98 aa).

3 helical membrane-spanning segments follow: residues 1–21, 29–49, and 61–81; these read MPVV…GLLI, SLLC…VTVL, and IILL…LVMV.

It belongs to the complex I subunit 4L family. As to quaternary structure, core subunit of respiratory chain NADH dehydrogenase (Complex I) which is composed of 45 different subunits.

It localises to the mitochondrion inner membrane. The enzyme catalyses a ubiquinone + NADH + 5 H(+)(in) = a ubiquinol + NAD(+) + 4 H(+)(out). Core subunit of the mitochondrial membrane respiratory chain NADH dehydrogenase (Complex I) which catalyzes electron transfer from NADH through the respiratory chain, using ubiquinone as an electron acceptor. Part of the enzyme membrane arm which is embedded in the lipid bilayer and involved in proton translocation. This Helarctos malayanus (Malayan sun bear) protein is NADH-ubiquinone oxidoreductase chain 4L (MT-ND4L).